A 167-amino-acid polypeptide reads, in one-letter code: MANAKQLALFAMLVLLLASCAAARRHGKPDPCDGGGGGVDSHLPPGMRRCSSPAVSEDGTPAVMTVNGFEEGEDGGGPAACDGRYHSDRSLVAALSTGWFAGGRRCHRGIRITSRQNGRSVVATVVDECDSRHGGCKDDIVDTSAAVWSALGLDTNVGEVPVTWSDA.

Positions 1–23 (MANAKQLALFAMLVLLLASCAAA) are cleaved as a signal peptide. Residues 28-57 (KPDPCDGGGGGVDSHLPPGMRRCSSPAVSE) are disordered.

It belongs to the kiwellin family.

Its subcellular location is the secreted. In Oryza sativa subsp. japonica (Rice), this protein is Putative ripening-related protein 6.